Reading from the N-terminus, the 345-residue chain is NADPH dehydrogenase (345 aa).

23–26 provides a ligand contact to FMN; it reads SPMC. Position 28 (tyrosine 28) interacts with substrate. 2 residues coordinate FMN: alanine 60 and glutamine 102. A substrate-binding site is contributed by 164–167; sequence HGAH. Residues arginine 215 and 307-308 contribute to the FMN site; that span reads GR.

Belongs to the NADH:flavin oxidoreductase/NADH oxidase family. NamA subfamily. As to quaternary structure, homotetramer. Requires FMN as cofactor.

It carries out the reaction A + NADPH + H(+) = AH2 + NADP(+). Functionally, catalyzes the reduction of the double bond of an array of alpha,beta-unsaturated aldehydes and ketones. It also reduces the nitro group of nitroester and nitroaromatic compounds. It could have a role in detoxification processes. In Bacillus mycoides (strain KBAB4) (Bacillus weihenstephanensis), this protein is NADPH dehydrogenase.